A 119-amino-acid polypeptide reads, in one-letter code: Large ribosomal subunit protein uL24 (119 aa).

This sequence belongs to the universal ribosomal protein uL24 family. As to quaternary structure, part of the 50S ribosomal subunit.

In terms of biological role, one of two assembly initiator proteins, it binds directly to the 5'-end of the 23S rRNA, where it nucleates assembly of the 50S subunit. Functionally, located at the polypeptide exit tunnel on the outside of the subunit. The polypeptide is Large ribosomal subunit protein uL24 (Methanococcus vannielii).